A 154-amino-acid polypeptide reads, in one-letter code: Sec-independent protein translocase protein TatB (154 aa).

The helical transmembrane segment at methionine 1–glycine 21 threads the bilayer.

It belongs to the TatB family. In terms of assembly, the Tat system comprises two distinct complexes: a TatABC complex, containing multiple copies of TatA, TatB and TatC subunits, and a separate TatA complex, containing only TatA subunits. Substrates initially bind to the TatABC complex, which probably triggers association of the separate TatA complex to form the active translocon.

It localises to the cell inner membrane. In terms of biological role, part of the twin-arginine translocation (Tat) system that transports large folded proteins containing a characteristic twin-arginine motif in their signal peptide across membranes. Together with TatC, TatB is part of a receptor directly interacting with Tat signal peptides. TatB may form an oligomeric binding site that transiently accommodates folded Tat precursor proteins before their translocation. In Albidiferax ferrireducens (strain ATCC BAA-621 / DSM 15236 / T118) (Rhodoferax ferrireducens), this protein is Sec-independent protein translocase protein TatB.